A 314-amino-acid chain; its full sequence is MKKKLINFKNALVLVVGDLILDCYWYSKNYYVVLEESLPIASINKIKKQPGGAANVAKNIAEIGGNSKIIGFIGMDYEGLTLKKLLNHTRIYPDLISIKKNKTITKIRILSEKKQLIRLDFQEKYISKKFNLLYEKIISSLTYYKVLVLSDYAKGTLVNVKKIITLAKKMSIPILIDPKGLDFKKYSGATLLTPNLSEFEQIVGKCHQEKQILQRGIKLVSELNLSALLVTRSKNGMTLFQPEKQPIHFPALSKTASDVTGAGDTVISIIASSLATGYSLEEACFYANVGASIVIQKIGTETLTINQLNTVLNI.

The protein belongs to the carbohydrate kinase PfkB family.

This is an uncharacterized protein from Buchnera aphidicola subsp. Schizaphis graminum (strain Sg).